We begin with the raw amino-acid sequence, 203 residues long: SOSS complex subunit B1-A (203 aa).

The segment at residues 22 to 92 (IVLETGRVTK…TLYTGRGGDL (71 aa)) is a DNA-binding region (OB). A disordered region spans residues 110–203 (EPNPEYIAQQ…GKESRRTGKR (94 aa)). The segment covering 118 to 140 (QQSQSKQGQQESGTGTNNHNSSS) has biased composition (low complexity). The segment covering 149–182 (ENGNGSNSSGPPAHQSTAPAHSASGRITRSQPNH) has biased composition (polar residues).

Belongs to the SOSS-B family. SOSS-B1 subfamily. In terms of assembly, component of the SOSS complex, composed of soss-b (soss-b1/nabp2 or soss-b2/nabp1), soss-a/ints3 and soss-c/inip. SOSS complexes containing soss-b1/nabp2 are more abundant than complexes containing soss-b2/nabp1.

It localises to the nucleus. In terms of biological role, component of the SOSS complex, a multiprotein complex that functions downstream of the MRN complex to promote DNA repair and G2/M checkpoint. In the SOSS complex, acts as a sensor of single-stranded DNA that binds to single-stranded DNA. The SOSS complex associates with DNA lesions and influences diverse endpoints in the cellular DNA damage response including cell-cycle checkpoint activation, recombinational repair and maintenance of genomic stability. Required for efficient homologous recombination-dependent repair of double-strand breaks (DSBs). This is SOSS complex subunit B1-A (nabp2-a) from Xenopus laevis (African clawed frog).